A 417-amino-acid chain; its full sequence is Queuine tRNA-ribosyltransferase accessory subunit 2 (417 aa).

Zn(2+)-binding residues include C324, C326, C329, and H355.

It belongs to the queuine tRNA-ribosyltransferase family. QTRT2 subfamily. As to quaternary structure, heterodimer of a catalytic subunit and an accessory subunit. Requires Zn(2+) as cofactor.

It localises to the cytoplasm. Its function is as follows. Non-catalytic subunit of the queuine tRNA-ribosyltransferase (TGT) that catalyzes the base-exchange of a guanine (G) residue with queuine (Q) at position 34 (anticodon wobble position) in tRNAs with GU(N) anticodons (tRNA-Asp, -Asn, -His and -Tyr), resulting in the hypermodified nucleoside queuosine (7-(((4,5-cis-dihydroxy-2-cyclopenten-1-yl)amino)methyl)-7-deazaguanosine). The sequence is that of Queuine tRNA-ribosyltransferase accessory subunit 2 from Drosophila pseudoobscura pseudoobscura (Fruit fly).